The following is a 465-amino-acid chain: Probable M18 family aminopeptidase 1 (465 aa).

Zn(2+) is bound by residues His105, His180, and His441.

It belongs to the peptidase M18 family. Requires Zn(2+) as cofactor.

The polypeptide is Probable M18 family aminopeptidase 1 (apeA) (Clostridium acetobutylicum (strain ATCC 824 / DSM 792 / JCM 1419 / IAM 19013 / LMG 5710 / NBRC 13948 / NRRL B-527 / VKM B-1787 / 2291 / W)).